Reading from the N-terminus, the 129-residue chain is UPF0325 protein SG1947 (129 aa).

This sequence belongs to the UPF0325 family.

The polypeptide is UPF0325 protein SG1947 (Sodalis glossinidius (strain morsitans)).